The primary structure comprises 131 residues: Fumarate reductase subunit C (131 aa).

Transmembrane regions (helical) follow at residues 30–50, 57–77, and 109–129; these read EGTAVPTVWFSIELIFGLFAL, WMGFVGFLQNPVVVILNLITL, and IIKGLWVVTAVVTVVILYVAL.

Belongs to the FrdC family. Part of an enzyme complex containing four subunits: a flavoprotein (FrdA), an iron-sulfur protein (FrdB), and two hydrophobic anchor proteins (FrdC and FrdD).

It is found in the cell inner membrane. Two distinct, membrane-bound, FAD-containing enzymes are responsible for the catalysis of fumarate and succinate interconversion; fumarate reductase is used in anaerobic growth, and succinate dehydrogenase is used in aerobic growth. Anchors the catalytic components of the fumarate reductase complex to the cell inner membrane, binds quinones. This is Fumarate reductase subunit C from Salmonella dublin (strain CT_02021853).